The chain runs to 109 residues: Ig kappa chain V region K16-167 (109 aa).

Residues Ala1–Cys23 form a framework-1 region. The segment at Gln24–Ser35 is complementarity-determining-1. The segment at Trp36–Tyr50 is framework-2. The segment at Lys51 to Ser57 is complementarity-determining-2. Residues Gly58–Cys89 are framework-3. A complementarity-determining-3 region spans residues Gln90–Val99. The framework-4 stretch occupies residues Phe100–Lys109.

This chain is Ig kappa chain V region K16-167, found in Oryctolagus cuniculus (Rabbit).